The primary structure comprises 529 residues: Bifunctional purine biosynthesis protein PurH (529 aa).

The 148-residue stretch at 1–148 (MQQRRPVRRA…KNHKDVAIVV (148 aa)) folds into the MGS-like domain.

Belongs to the PurH family.

The catalysed reaction is (6R)-10-formyltetrahydrofolate + 5-amino-1-(5-phospho-beta-D-ribosyl)imidazole-4-carboxamide = 5-formamido-1-(5-phospho-D-ribosyl)imidazole-4-carboxamide + (6S)-5,6,7,8-tetrahydrofolate. The enzyme catalyses IMP + H2O = 5-formamido-1-(5-phospho-D-ribosyl)imidazole-4-carboxamide. It functions in the pathway purine metabolism; IMP biosynthesis via de novo pathway; 5-formamido-1-(5-phospho-D-ribosyl)imidazole-4-carboxamide from 5-amino-1-(5-phospho-D-ribosyl)imidazole-4-carboxamide (10-formyl THF route): step 1/1. Its pathway is purine metabolism; IMP biosynthesis via de novo pathway; IMP from 5-formamido-1-(5-phospho-D-ribosyl)imidazole-4-carboxamide: step 1/1. This Salmonella newport (strain SL254) protein is Bifunctional purine biosynthesis protein PurH.